Reading from the N-terminus, the 663-residue chain is MKKFGAVVLALFLVGLMAGSVLAAPQKPAVRNVSQQKNYGLLTPGLFKKVQRMSWDQEVSTIIMFDNQADKEKAVEILDFLGAKIKYNYHIIPALAVKIKVKDLLIIAGLMDTGYFGNAQLSGVQFIQEDYVVKVAVETEGLDESAAQVMATNMWNLGYDGSGITIGIIDTGIDASHPDLQGKVIGWVDFVNGKTTPYDDNGHGTHVASIAAGTGAASNGKYKGMAPGAKLVGIKVLNGQGSGSISDIINGVDWAVQNKDKYGIKVINLSLGSSQSSDGTDSLSQAVNNAWDAGLVVVVAAGNSGPNKYTVGSPAAASKVITVGAVDKYDVITDFSSRGPTADNRLKPEVVAPGNWIIAARASGTSMGQPINDYYTAAPGTSMATPHVAGIAALLLQAHPSWTPDKVKTALIETADIVKPDEIADIAYGAGRVNAYKAAYYDNYAKLTFTGYVSNKGSQSHQFTISGAGFVTATLYWDNSGSDLDLYLYDPNGNQVDYSYTAYYGFEKVGYYNPTAGTWTIKVVSYSGSANYQVDVVSDGSLGQPSGGGSEPSPSPSPEPTVDEKTFTGTVHDYYDKSDTFTMTVNSGATKITGDLYFDTSYHDLDLYLYDPNQNLVDRSESSNSYEHVEYNNPAPGTWYFLVYAYDTYGYADYQLDAKVYYG.

The N-terminal stretch at 1 to 23 (MKKFGAVVLALFLVGLMAGSVLA) is a signal peptide. The propeptide at 24 to 136 (APQKPAVRNV…IQEDYVVKVA (113 aa)) is removed in mature form. Residues 139-439 (TEGLDESAAQ…AGRVNAYKAA (301 aa)) enclose the Peptidase S8 domain. Catalysis depends on charge relay system residues aspartate 170, histidine 203, and serine 382. Residues proline 420, isoleucine 423, aspartate 483, leucine 484, aspartate 485, aspartate 497, tyrosine 498, threonine 501, and glutamate 507 each contribute to the Ca(2+) site. The interval 537 to 565 (VSDGSLGQPSGGGSEPSPSPSPEPTVDEK) is disordered. Residues 563 to 663 (DEKTFTGTVH…YQLDAKVYYG (101 aa)) constitute a propeptide, removed in mature form.

The protein belongs to the peptidase S8 family. In terms of assembly, monomer.

The enzyme catalyses Hydrolysis of proteins with broad specificity for peptide bonds, and a preference for a large uncharged residue in P1. Hydrolyzes peptide amides.. With respect to regulation, resistant to treatment with 5% SDS, 8 M urea, 10% Triton X-100 or 10% Tween-20. Fully active although less stable in the presence of 10 mM EDTA. Activity not affected by the absence or presence of 10 mM CaCl(2). Unstable in the presence of 2 M or over GdnHCl and loses 35% and 99% of its activity upon incubation with 2 and 4 M GdnHCl, respectively, for 1 hour at 55 degrees Celsius. Nearly fully loses activity upon incubation at pH 2.0. Its function is as follows. Serine protease with a broad substrate specificity. This is Subtilisin-like serine protease from Thermococcus kodakarensis (strain ATCC BAA-918 / JCM 12380 / KOD1) (Pyrococcus kodakaraensis (strain KOD1)).